A 45-amino-acid chain; its full sequence is Peroxidase 3 (45 aa).

This sequence belongs to the peroxidase family. Classical plant (class III) peroxidase subfamily. It depends on heme b as a cofactor. Requires Ca(2+) as cofactor.

It localises to the secreted. The enzyme catalyses 2 a phenolic donor + H2O2 = 2 a phenolic radical donor + 2 H2O. In terms of biological role, removal of H(2)O(2), oxidation of toxic reductants, biosynthesis and degradation of lignin, suberization, auxin catabolism, response to environmental stresses such as wounding, pathogen attack and oxidative stress. These functions might be dependent on each isozyme/isoform in each plant tissue. This Capsicum annuum (Capsicum pepper) protein is Peroxidase 3.